We begin with the raw amino-acid sequence, 528 residues long: UDP-glucuronosyltransferase 1A9 (528 aa).

Residues 1–23 (MAPVAFPTSFFLCLLLASGLAQA) form the signal peptide. Asn-69 carries N-linked (GlcNAc...) asparagine glycosylation. The residue at position 97 (Lys-97) is an N6-succinyllysine. Asn-290 and Asn-428 each carry an N-linked (GlcNAc...) asparagine glycan. The chain crosses the membrane as a helical span at residues 486-506 (VIGFLLAIVLTVVFIVFKCCA).

Belongs to the UDP-glycosyltransferase family. As to quaternary structure, homodimer. Homooligomer. Interacts with UGT1A1, UGT1A3, UGT1A4, UGT1A6, UGT1A7, UGT1A8 and UGT1A10 to form heterodimers. In terms of tissue distribution, highly expressed in liver and at lower levels in stomach and kidney.

It localises to the endoplasmic reticulum membrane. The catalysed reaction is glucuronate acceptor + UDP-alpha-D-glucuronate = acceptor beta-D-glucuronoside + UDP + H(+). The enzyme catalyses 2-hydroxy-17beta-estradiol + UDP-alpha-D-glucuronate = 2-hydroxy-17beta-estradiol 3-O-(beta-D-glucuronate) + UDP + H(+). It catalyses the reaction 4-hydroxy-17beta-estradiol + UDP-alpha-D-glucuronate = 17beta-estradiol 4-O-(beta-D-glucuronate) + UDP + H(+). It carries out the reaction 2-hydroxyestrone + UDP-alpha-D-glucuronate = 2-hydroxyestrone 3-O-(beta-D-glucuronate) + UDP + H(+). The catalysed reaction is 4-hydroxyestrone + UDP-alpha-D-glucuronate = estrone 4-O-(beta-D-glucuronate) + UDP + H(+). The enzyme catalyses prunetin + UDP-alpha-D-glucuronate = prunetin-5-O-beta-D-glucuronide + UDP. It catalyses the reaction 8-iso-prostaglandin F2alpha + UDP-alpha-D-glucuronate = 8-iso-prostaglandin F2alpha-glucuronide + UDP + H(+). It carries out the reaction 5-epi-5-F2t-IsoP + UDP-alpha-D-glucuronate = 5-epi-5-F2t-IsoP-glucuronide + UDP + H(+). The catalysed reaction is (5Z,8Z,11Z,14Z)-eicosatetraenoate + UDP-alpha-D-glucuronate = O-[(5Z),(8Z),(11Z),(14Z)-eicosatetraenoyl]-beta-D-glucuronate + UDP. The enzyme catalyses 15-hydroxy-(5Z,8Z,11Z,13E)-eicosatetraenoate + UDP-alpha-D-glucuronate = 15-O-(beta-D-glucuronosyl)-(5Z,8Z,11Z,14Z)-eicosatetraenoate + UDP + H(+). It catalyses the reaction prostaglandin B1 + UDP-alpha-D-glucuronate = 15-O-(beta-D-glucuronosyl)-prostaglandin B1 + UDP + H(+). It carries out the reaction (E)-ferulate + UDP-alpha-D-glucuronate = (E)-4-O-(beta-D-glucuronosyl)-ferulate + UDP + H(+). The catalysed reaction is (E)-ferulate + UDP-alpha-D-glucuronate = (E)-ferulic acid beta-D-glucuronate ester + UDP. The enzyme catalyses candesartan + UDP-alpha-D-glucuronate = candesartan O-beta-D-glucuronoside + UDP. It catalyses the reaction SN-38 + UDP-alpha-D-glucuronate = SN-38 O-beta-D-glucuronide + UDP + H(+). It carries out the reaction mycophenolate + UDP-alpha-D-glucuronate = mycophenolate 7-O-beta-D-glucuronide + UDP + H(+). In terms of biological role, UDP-glucuronosyltransferase (UGT) that catalyzes phase II biotransformation reactions in which lipophilic substrates are conjugated with glucuronic acid to increase the metabolite's water solubility, thereby facilitating excretion into either the urine or bile. Essential for the elimination and detoxification of drugs, xenobiotics and endogenous compounds. Catalyzes the glucuronidation of endogenous estrogen hormones such as estradiol and estrone. Involved in the glucuronidation of arachidonic acid (AA) and AA-derived eicosanoids including 15-HETE, PGB1 and F2-isoprostanes (8-iso-PGF2alpha and 5-epi-5-F2t-IsoP). Glucuronates the phytochemical ferulic acid efficently at both the phenolic or the carboxylic acid group. Also catalyzes the glucuronidation of the isoflavones genistein, daidzein, glycitein, formononetin, biochanin A and prunetin, which are phytoestrogens with anticancer and cardiovascular properties. Involved in the glucuronidation of the AGTR1 angiotensin receptor antagonist caderastan, a drug which can inhibit the effect of angiotensin II. Involved in the biotransformation of 7-ethyl-10-hydroxycamptothecin (SN-38), the pharmacologically active metabolite of the anticancer drug irinotecan. Also metabolizes mycophenolate, an immunosuppressive agent. This is UDP-glucuronosyltransferase 1A9 from Mus musculus (Mouse).